Here is a 125-residue protein sequence, read N- to C-terminus: Meiotically up-regulated gene 112 protein (125 aa).

The protein localises to the golgi apparatus. Functionally, has a role in meiosis. The sequence is that of Meiotically up-regulated gene 112 protein (mug112) from Schizosaccharomyces pombe (strain 972 / ATCC 24843) (Fission yeast).